A 654-amino-acid chain; its full sequence is Tetratricopeptide repeat protein 30 homolog (654 aa).

TPR repeat units follow at residues 10-43, 44-76, 143-176, 178-210, 384-417, 449-483, and 533-566; these read EGHV…ANTR, AGLS…APKE, ADTL…GGFN, LVAY…GVRN, LAAK…YLPV, AVWR…HSDD, and CIVN…GAGG.

It belongs to the TTC30/dfy-1/fleer family.

It is found in the cell projection. The protein resides in the cilium. Required for polyglutamylation of axonemal tubulin in sensory cilia. Plays a role in anterograde intraflagellar transport (IFT), the process by which cilia precursors are transported from the base of the cilium to the site of their incorporation at the tip. This is Tetratricopeptide repeat protein 30 homolog from Drosophila pseudoobscura pseudoobscura (Fruit fly).